The following is a 336-amino-acid chain: Dihydroorotate dehydrogenase (quinone) (336 aa).

Residues alanine 62–lysine 66 and threonine 86 contribute to the FMN site. Lysine 66 serves as a coordination point for substrate. Asparagine 111–phenylalanine 115 contacts substrate. Positions 139 and 172 each coordinate FMN. Position 172 (asparagine 172) interacts with substrate. The active-site Nucleophile is the serine 175. Asparagine 177 contributes to the substrate binding site. FMN-binding residues include lysine 217 and threonine 245. Asparagine 246 to threonine 247 serves as a coordination point for substrate. Residues glycine 268, glycine 297, and tyrosine 318–serine 319 each bind FMN.

Belongs to the dihydroorotate dehydrogenase family. Type 2 subfamily. As to quaternary structure, monomer. The cofactor is FMN.

It is found in the cell membrane. It carries out the reaction (S)-dihydroorotate + a quinone = orotate + a quinol. It participates in pyrimidine metabolism; UMP biosynthesis via de novo pathway; orotate from (S)-dihydroorotate (quinone route): step 1/1. Catalyzes the conversion of dihydroorotate to orotate with quinone as electron acceptor. The chain is Dihydroorotate dehydrogenase (quinone) from Salmonella agona (strain SL483).